Here is a 434-residue protein sequence, read N- to C-terminus: Nucleobase transporter PlUacP (434 aa).

The next 12 helical transmembrane spans lie at L9–G29, L39–W59, F63–I83, A93–G113, F118–V138, A159–I179, A181–V201, F218–I238, V306–L326, T327–V347, L365–F385, and I394–F414.

This sequence belongs to the nucleobase:cation symporter-2 (NCS2) (TC 2.A.40) family.

The protein localises to the cell membrane. Its activity is regulated as follows. Inhibited by the proton gradient disruptor carbonyl cyanide m-chlorophenylhydrazone (CCCP), but not by the sodium gradient disruptor ouabain. Hypoxanthine, xanthine, cytosine and uric acid act as competitive inhibitors. Its function is as follows. Uptake of the purines adenine and guanine, and the pyrimidine uracil. Transport is probably proton-dependent. The polypeptide is Nucleobase transporter PlUacP (Paenibacillus larvae subsp. larvae (strain NRRL B-3650 / LMG 16245)).